Reading from the N-terminus, the 609-residue chain is UvrABC system protein C (609 aa).

The GIY-YIG domain occupies 15 to 93 (SSAGVYRMYD…IKQYMPKYNV (79 aa)). The UVR domain maps to 202–237 (QQVVTNLVTKMEQAAEEFHYEQAAAYRDQITALRKV).

This sequence belongs to the UvrC family. As to quaternary structure, interacts with UvrB in an incision complex.

The protein localises to the cytoplasm. The UvrABC repair system catalyzes the recognition and processing of DNA lesions. UvrC both incises the 5' and 3' sides of the lesion. The N-terminal half is responsible for the 3' incision and the C-terminal half is responsible for the 5' incision. The chain is UvrABC system protein C from Shewanella denitrificans (strain OS217 / ATCC BAA-1090 / DSM 15013).